The primary structure comprises 73 residues: Neuropeptide-like protein 29 (73 aa).

Positions 1-22 (MISTSSILVLVVLLACFMAASA) are cleaved as a signal peptide. Tyrosine amide is present on residues tyrosine 29, tyrosine 39, tyrosine 47, tyrosine 55, and tyrosine 63. Tryptophan 71 is subject to Tryptophan amide.

It belongs to the YARP (YGGW-amide related peptide) family. As to expression, weakly or not expressed in absence of infection. Upon infection by D.coniospora, it is expressed in hypoderm. Also expressed in perivulval cells when D.coniospora spores adhere to this region. Expressed in hypodermis upon physical injury.

The protein localises to the secreted. Antimicrobial peptides that have antibacterial activity against the Gram-negative bacteria S.marcescens. Has antifungal activity against D.coniospora. May play a role in response to physical injury and osmotic stress. Through the neuropeptide receptor nlp-29, induces sleep upon activation of the innate immune response to molting and injury to the adult epidermis. This Caenorhabditis elegans protein is Neuropeptide-like protein 29.